The sequence spans 330 residues: Ketol-acid reductoisomerase (NADP(+)) (330 aa).

Positions 1-181 constitute a KARI N-terminal Rossmann domain; that stretch reads MNVYYEQDAD…GGTKAGVIET (181 aa). NADP(+) contacts are provided by residues 24 to 27, arginine 47, serine 50, serine 52, and 82 to 85; these read YGSQ and DQTQ. The active site involves histidine 107. An NADP(+)-binding site is contributed by glycine 133. A KARI C-terminal knotted domain is found at 182–327; that stretch reads NFKDETETDL…AKLRNMMSWL (146 aa). The Mg(2+) site is built by aspartate 190, glutamate 194, glutamate 226, and glutamate 230. Residue serine 251 participates in substrate binding.

This sequence belongs to the ketol-acid reductoisomerase family. Mg(2+) is required as a cofactor.

It carries out the reaction (2R)-2,3-dihydroxy-3-methylbutanoate + NADP(+) = (2S)-2-acetolactate + NADPH + H(+). The catalysed reaction is (2R,3R)-2,3-dihydroxy-3-methylpentanoate + NADP(+) = (S)-2-ethyl-2-hydroxy-3-oxobutanoate + NADPH + H(+). The protein operates within amino-acid biosynthesis; L-isoleucine biosynthesis; L-isoleucine from 2-oxobutanoate: step 2/4. It functions in the pathway amino-acid biosynthesis; L-valine biosynthesis; L-valine from pyruvate: step 2/4. In terms of biological role, involved in the biosynthesis of branched-chain amino acids (BCAA). Catalyzes an alkyl-migration followed by a ketol-acid reduction of (S)-2-acetolactate (S2AL) to yield (R)-2,3-dihydroxy-isovalerate. In the isomerase reaction, S2AL is rearranged via a Mg-dependent methyl migration to produce 3-hydroxy-3-methyl-2-ketobutyrate (HMKB). In the reductase reaction, this 2-ketoacid undergoes a metal-dependent reduction by NADPH to yield (R)-2,3-dihydroxy-isovalerate. The sequence is that of Ketol-acid reductoisomerase (NADP(+)) from Chlorobium luteolum (strain DSM 273 / BCRC 81028 / 2530) (Pelodictyon luteolum).